A 170-amino-acid polypeptide reads, in one-letter code: ATP synthase subunit b (170 aa).

The chain crosses the membrane as a helical span at residues Ala-11 to Ile-31.

Belongs to the ATPase B chain family. In terms of assembly, F-type ATPases have 2 components, F(1) - the catalytic core - and F(0) - the membrane proton channel. F(1) has five subunits: alpha(3), beta(3), gamma(1), delta(1), epsilon(1). F(0) has three main subunits: a(1), b(2) and c(10-14). The alpha and beta chains form an alternating ring which encloses part of the gamma chain. F(1) is attached to F(0) by a central stalk formed by the gamma and epsilon chains, while a peripheral stalk is formed by the delta and b chains.

It localises to the cell membrane. Functionally, f(1)F(0) ATP synthase produces ATP from ADP in the presence of a proton or sodium gradient. F-type ATPases consist of two structural domains, F(1) containing the extramembraneous catalytic core and F(0) containing the membrane proton channel, linked together by a central stalk and a peripheral stalk. During catalysis, ATP synthesis in the catalytic domain of F(1) is coupled via a rotary mechanism of the central stalk subunits to proton translocation. In terms of biological role, component of the F(0) channel, it forms part of the peripheral stalk, linking F(1) to F(0). The chain is ATP synthase subunit b from Listeria innocua serovar 6a (strain ATCC BAA-680 / CLIP 11262).